Reading from the N-terminus, the 177-residue chain is Transcription termination/antitermination protein NusG (177 aa).

The region spanning 125–150 (EGENVRITEGPFANFTAIVEEYDMVR) is the KOW domain.

Belongs to the NusG family.

In terms of biological role, participates in transcription elongation, termination and antitermination. This Campylobacter jejuni subsp. jejuni serotype O:2 (strain ATCC 700819 / NCTC 11168) protein is Transcription termination/antitermination protein NusG.